Reading from the N-terminus, the 530-residue chain is Ubiquitin carboxyl-terminal hydrolase 17-like protein 21 (530 aa).

The USP domain occupies 80-375 (AGLQNMGNTC…QAYVLFYIQK (296 aa)). The Nucleophile role is filled by Cys89. His334 (proton acceptor) is an active-site residue. Basic and acidic residues-rich tracts occupy residues 382 to 392 (SESVSRGREPR) and 398 to 412 (DTDR…KRDH). 2 disordered regions span residues 382–412 (SESV…KRDH) and 477–530 (NHHP…LVCQ). Residues 493–505 (TPTHQESMNTGTL) are compositionally biased toward polar residues. Positions 510-524 (GRARRSKGKNKHSKR) are enriched in basic residues.

It belongs to the peptidase C19 family. USP17 subfamily.

It is found in the nucleus. It localises to the endoplasmic reticulum. It carries out the reaction Thiol-dependent hydrolysis of ester, thioester, amide, peptide and isopeptide bonds formed by the C-terminal Gly of ubiquitin (a 76-residue protein attached to proteins as an intracellular targeting signal).. Deubiquitinating enzyme that removes conjugated ubiquitin from specific proteins to regulate different cellular processes that may include cell proliferation, progression through the cell cycle, apoptosis, cell migration, and the cellular response to viral infection. The polypeptide is Ubiquitin carboxyl-terminal hydrolase 17-like protein 21 (USP17L21) (Homo sapiens (Human)).